Here is a 472-residue protein sequence, read N- to C-terminus: Adenosylhomocysteinase (472 aa).

Residues Thr64, Asp138, and Glu198 each coordinate substrate. Residue Thr199–Thr201 coordinates NAD(+). Residues Lys228 and Asp232 each coordinate substrate. Residues Asn233, Gly262–Gly267, Glu285, Asn320, Ile341–His343, and Asn386 contribute to the NAD(+) site.

Belongs to the adenosylhomocysteinase family. NAD(+) is required as a cofactor.

It is found in the cytoplasm. It carries out the reaction S-adenosyl-L-homocysteine + H2O = L-homocysteine + adenosine. The protein operates within amino-acid biosynthesis; L-homocysteine biosynthesis; L-homocysteine from S-adenosyl-L-homocysteine: step 1/1. May play a key role in the regulation of the intracellular concentration of adenosylhomocysteine. The chain is Adenosylhomocysteinase from Prochlorococcus marinus (strain MIT 9301).